Here is a 284-residue protein sequence, read N- to C-terminus: MSVEKNTRQLEKDIVRDFSSRMSYASYLQLPTLLSAQQPVSNPEHHDEMLFIIQHQTTELWLKLVLHELRSAAAWLRSDDLGSALKAIARVKHIQKTLTEQWSVLATLTPTEYSQFRRFLGNSSGFQSSQYRAVEFVLGNKNRKMLPVFESDPEAYQQLSNVLEAPSIYDEFLAYLNRQGFDIPTSLLERDVTKAHQFCPELVPVFKHIYENAADNWGAYEACEELVDLEDNFQLWRFRHLRTVQRTIGMKAGTGGSSGAAFLQKALELTFFPELFAVRTEIGQ.

Substrate contacts are provided by residues 51–55 (FIIQH), Tyr113, and Arg117. His240 lines the heme pocket. Thr254 is a substrate binding site.

The protein belongs to the tryptophan 2,3-dioxygenase family. In terms of assembly, homotetramer. Requires heme as cofactor.

The enzyme catalyses L-tryptophan + O2 = N-formyl-L-kynurenine. It participates in amino-acid degradation; L-tryptophan degradation via kynurenine pathway; L-kynurenine from L-tryptophan: step 1/2. Heme-dependent dioxygenase that catalyzes the oxidative cleavage of the L-tryptophan (L-Trp) pyrrole ring and converts L-tryptophan to N-formyl-L-kynurenine. Catalyzes the oxidative cleavage of the indole moiety. This chain is Tryptophan 2,3-dioxygenase, found in Arthrobacter sp. (strain FB24).